The sequence spans 56 residues: Ribosome biogenesis protein Nop10 (56 aa).

The protein belongs to the NOP10 family.

Its function is as follows. Involved in ribosome biogenesis; more specifically in 18S rRNA pseudouridylation and in cleavage of pre-rRNA. The protein is Ribosome biogenesis protein Nop10 of Saccharolobus islandicus (strain Y.N.15.51 / Yellowstone #2) (Sulfolobus islandicus).